We begin with the raw amino-acid sequence, 924 residues long: Probable dipeptidyl-aminopeptidase B (924 aa).

Residues Met-1–Arg-12 are compositionally biased toward polar residues. Positions Met-1–Gly-102 are disordered. Over Met-1 to Arg-111 the chain is Cytoplasmic. Residues Gly-14–Pro-23 are compositionally biased toward basic and acidic residues. Residues Ser-31–Ile-43 show a composition bias toward polar residues. Over residues Arg-47–Pro-58 the composition is skewed to basic and acidic residues. Residues Asn-87–Ala-100 are compositionally biased toward low complexity. Residues Trp-112–Val-132 traverse the membrane as a helical; Signal-anchor for type II membrane protein segment. Over Ser-133–Ala-924 the chain is Vacuolar. Asn-231 and Asn-364 each carry an N-linked (GlcNAc...) asparagine glycan. The Charge relay system role is filled by Ser-768. Asn-827 is a glycosylation site (N-linked (GlcNAc...) asparagine). Active-site charge relay system residues include Asp-845 and His-878.

The protein belongs to the peptidase S9B family.

It is found in the vacuole membrane. The enzyme catalyses Release of an N-terminal dipeptide, Xaa-Yaa-|-Zaa-, from a polypeptide, preferentially when Yaa is Pro, provided Zaa is neither Pro nor hydroxyproline.. Type IV dipeptidyl-peptidase which removes N-terminal dipeptides sequentially from polypeptides having unsubstituted N-termini provided that the penultimate residue is proline. The polypeptide is Probable dipeptidyl-aminopeptidase B (dapB) (Neurospora crassa (strain ATCC 24698 / 74-OR23-1A / CBS 708.71 / DSM 1257 / FGSC 987)).